The following is a 219-amino-acid chain: Ribose-5-phosphate isomerase A (219 aa).

Substrate contacts are provided by residues 28-31 (TGST), 81-84 (DGAD), and 94-97 (KGGG). Residue glutamate 103 is the Proton acceptor of the active site. Substrate is bound at residue lysine 121.

The protein belongs to the ribose 5-phosphate isomerase family. In terms of assembly, homodimer.

It catalyses the reaction aldehydo-D-ribose 5-phosphate = D-ribulose 5-phosphate. Its pathway is carbohydrate degradation; pentose phosphate pathway; D-ribose 5-phosphate from D-ribulose 5-phosphate (non-oxidative stage): step 1/1. In terms of biological role, catalyzes the reversible conversion of ribose-5-phosphate to ribulose 5-phosphate. In Shewanella sp. (strain ANA-3), this protein is Ribose-5-phosphate isomerase A.